An 84-amino-acid polypeptide reads, in one-letter code: Small ribosomal subunit protein uS17 (84 aa).

Belongs to the universal ribosomal protein uS17 family. In terms of assembly, part of the 30S ribosomal subunit.

In terms of biological role, one of the primary rRNA binding proteins, it binds specifically to the 5'-end of 16S ribosomal RNA. The sequence is that of Small ribosomal subunit protein uS17 from Treponema pallidum (strain Nichols).